The following is a 793-amino-acid chain: MPLASNPVAFLPSSTAHGDLPAAAFSRSSAGCLQLCRPLTPTSSLQCNAISRPRTEEYIDVIQNGLPVIKWHEIVEDDAEKDSPKDKVGELRDAVRSMLRSMGDGEISISPYDTAWVALVADADGDRPQFPSSLHWISTNQLADGSWGDHATFSIFDRIINTLACVVALTSWDLHPDKTHKGILFIKKNIHRLEEENVEHMPIGFEVALPSLIDIAKQLQIDIPSDTRGLREIYARREIKLKKIPSDILHQMPTTLLHSLEGMPGLMWQKLLKLQSEDGSFLFSPSSTAFALQQTKDHNCLKYLTNHLIKFKGGVPNVYPVDLFEHLWAVDRLQRLGVSRYFQPEIEECVAYVYRYWTEKGICWARNSEIQDIDDTAMGFRLLRLHGYEVSADVFKHFESGGEFFCFKGQSTQAVTGMYNLYRAAQLIFPGENILEDAATFSAKFLQQKRANNELLDKWIITKDLPGEVGYALDVPWYASLPRVETRFYLEQYGGEDDVWIGKTLYRMPYVNNNKYLELAKLDYNNCQALHQQEWKDIQKWYRNSSLGEFGLSEGSLVQAYYVAAASIFEPQKSQERLAWAKTAILMQTITSHFHHSAEQKRVFLHEFQHATGGRYKTTRTLVGTLLRTLNQLSLDILLAHGCHIHQPLKNAWHKWIKTWEGGGGGAELLVQTLNLCGGGRRNRWESEELLSSHPKYEHLLKATVGVCDKLRRFQHRKDCNGCMGSDGGIRMLDIEAGMQELVKLVVTKSPGDLDSEIKQNFFMIARSYYYAAYCNPGTINFHIAKVLFERVQ.

The N-terminal 47 residues, 1-47 (MPLASNPVAFLPSSTAHGDLPAAAFSRSSAGCLQLCRPLTPTSSLQC), are a transit peptide targeting the chloroplast. Mg(2+) is bound by residues Asp372 and Asp374. The DXDD motif motif lies at 372–375 (DIDD).

This sequence belongs to the terpene synthase family. The cofactor is Mg(2+).

It is found in the plastid. The protein localises to the chloroplast. The enzyme catalyses (2E,6E,10E)-geranylgeranyl diphosphate = ent-copalyl diphosphate. It functions in the pathway plant hormone biosynthesis; gibberellin biosynthesis. Functionally, catalyzes the conversion of geranylgeranyl diphosphate (GGPP) to the gibberellin precursor ent-copalyl diphosphate (CPP). This chain is Ent-copalyl diphosphate synthase, chloroplastic, found in Salvia miltiorrhiza (Chinese sage).